Consider the following 397-residue polypeptide: Protein EMSY-LIKE 3 (397 aa).

Residues 1 to 40 (MDYRPSDSSGTDDDLPPSHQGRYQRNARPTGNGRPSVLNS) form a disordered region. Residues 50–137 (METQIHLIEQ…PQLVHDAPSP (88 aa)) enclose the ENT domain. Residues 81–107 (ESLITELRKELRVSDEEHRELLSRVNA) adopt a coiled-coil conformation. Disordered stretches follow at residues 122–221 (SLQS…SYDP) and 284–330 (DPGI…TQNG). A compositionally biased stretch (polar residues) spans 164 to 174 (LHPSMQPSSSA). The Nuclear localization signal signature appears at 175–182 (LRRGGPPP). A coiled-coil region spans residues 363–389 (AEVEKAKRVLRDHELALMDAIAKLEEI). A Phosphoserine modification is found at Ser-390.

The protein localises to the nucleus. Its function is as follows. Probably involved in the regulation of chromatin states. Contributes to basal immunity. The sequence is that of Protein EMSY-LIKE 3 from Arabidopsis thaliana (Mouse-ear cress).